Reading from the N-terminus, the 313-residue chain is Aspartate carbamoyltransferase catalytic subunit (313 aa).

Carbamoyl phosphate-binding residues include arginine 58 and threonine 59. Lysine 86 lines the L-aspartate pocket. Carbamoyl phosphate is bound by residues arginine 108, histidine 136, and glutamine 139. Arginine 169 and arginine 223 together coordinate L-aspartate. 2 residues coordinate carbamoyl phosphate: glycine 265 and proline 266.

It belongs to the aspartate/ornithine carbamoyltransferase superfamily. ATCase family. As to quaternary structure, heterododecamer (2C3:3R2) of six catalytic PyrB chains organized as two trimers (C3), and six regulatory PyrI chains organized as three dimers (R2).

It catalyses the reaction carbamoyl phosphate + L-aspartate = N-carbamoyl-L-aspartate + phosphate + H(+). It functions in the pathway pyrimidine metabolism; UMP biosynthesis via de novo pathway; (S)-dihydroorotate from bicarbonate: step 2/3. Catalyzes the condensation of carbamoyl phosphate and aspartate to form carbamoyl aspartate and inorganic phosphate, the committed step in the de novo pyrimidine nucleotide biosynthesis pathway. The sequence is that of Aspartate carbamoyltransferase catalytic subunit from Anaeromyxobacter sp. (strain K).